The following is a 525-amino-acid chain: DNA damage-binding protein CMR1 (525 aa).

Disordered regions lie at residues 38 to 86 and 212 to 233; these read AGIF…AESE and GILD…EYPD. The span at 53 to 62 shows a compositional bias: basic residues; the sequence is TKKKPAPKRV. WD repeat units lie at residues 183–224, 241–281, 288–328, 339–379, 384–425, 448–491, and 494–525; these read ITRE…DQNE, PHTN…ATEA, SDDE…KANP, LSEK…TKHP, EHES…KDWK, GKWV…LAQL, and DVIT…CLWM. Residues 223–232 show a composition bias toward acidic residues; the sequence is NESDEEDEYP.

The protein belongs to the WD repeat DDB2/WDR76 family.

DNA-binding protein that binds to both single- and double-stranded DNA. Binds preferentially to UV-damaged DNA. May be involved in DNA-metabolic processes. This is DNA damage-binding protein CMR1 from Coccidioides immitis (strain RS) (Valley fever fungus).